Reading from the N-terminus, the 700-residue chain is Acetyl-coenzyme A carboxylase carboxyl transferase subunit beta, chloroplastic (700 aa).

Residues Cys34, Cys37, Cys53, and Cys56 each contribute to the Zn(2+) site. A C4-type zinc finger spans residues 34–56 (CENCETLIYKKSLLEQKGVCAEC). Residues 445 to 700 (KKGRDTKDTE…ETIEIYMYGD (256 aa)) form the CoA carboxyltransferase N-terminal domain.

The protein belongs to the AccD/PCCB family. In terms of assembly, acetyl-CoA carboxylase is a heterohexamer composed of biotin carboxyl carrier protein, biotin carboxylase and 2 subunits each of ACCase subunit alpha and ACCase plastid-coded subunit beta (accD). The cofactor is Zn(2+).

Its subcellular location is the plastid. It is found in the chloroplast stroma. The catalysed reaction is N(6)-carboxybiotinyl-L-lysyl-[protein] + acetyl-CoA = N(6)-biotinyl-L-lysyl-[protein] + malonyl-CoA. It functions in the pathway lipid metabolism; malonyl-CoA biosynthesis; malonyl-CoA from acetyl-CoA: step 1/1. In terms of biological role, component of the acetyl coenzyme A carboxylase (ACC) complex. Biotin carboxylase (BC) catalyzes the carboxylation of biotin on its carrier protein (BCCP) and then the CO(2) group is transferred by the transcarboxylase to acetyl-CoA to form malonyl-CoA. The protein is Acetyl-coenzyme A carboxylase carboxyl transferase subunit beta, chloroplastic of Cryptomeria japonica (Japanese cedar).